The primary structure comprises 293 residues: Formamidopyrimidine-DNA glycosylase (293 aa).

Pro-2 functions as the Schiff-base intermediate with DNA in the catalytic mechanism. Residue Glu-3 is the Proton donor of the active site. Lys-58 serves as the catalytic Proton donor; for beta-elimination activity. DNA is bound by residues His-104, Arg-123, and Arg-166. Residues 257–293 form an FPG-type zinc finger; sequence KVYDREGEPCPTLRCKGHVQRIVQAGRSTFFCATCQR. Arg-283 (proton donor; for delta-elimination activity) is an active-site residue.

It belongs to the FPG family. In terms of assembly, monomer. The cofactor is Zn(2+).

It carries out the reaction Hydrolysis of DNA containing ring-opened 7-methylguanine residues, releasing 2,6-diamino-4-hydroxy-5-(N-methyl)formamidopyrimidine.. It catalyses the reaction 2'-deoxyribonucleotide-(2'-deoxyribose 5'-phosphate)-2'-deoxyribonucleotide-DNA = a 3'-end 2'-deoxyribonucleotide-(2,3-dehydro-2,3-deoxyribose 5'-phosphate)-DNA + a 5'-end 5'-phospho-2'-deoxyribonucleoside-DNA + H(+). Functionally, involved in base excision repair of DNA damaged by oxidation or by mutagenic agents. Acts as a DNA glycosylase that recognizes and removes damaged bases. Has a preference for oxidized purines, such as 7,8-dihydro-8-oxoguanine (8-oxoG). Has AP (apurinic/apyrimidinic) lyase activity and introduces nicks in the DNA strand. Cleaves the DNA backbone by beta-delta elimination to generate a single-strand break at the site of the removed base with both 3'- and 5'-phosphates. This chain is Formamidopyrimidine-DNA glycosylase, found in Azorhizobium caulinodans (strain ATCC 43989 / DSM 5975 / JCM 20966 / LMG 6465 / NBRC 14845 / NCIMB 13405 / ORS 571).